The sequence spans 250 residues: Ribosomal RNA small subunit methyltransferase J (250 aa).

S-adenosyl-L-methionine-binding positions include 101–102, 117–118, 153–154, and Asp-171; these read RD, ER, and SS.

The protein belongs to the methyltransferase superfamily. RsmJ family.

The protein resides in the cytoplasm. It catalyses the reaction guanosine(1516) in 16S rRNA + S-adenosyl-L-methionine = N(2)-methylguanosine(1516) in 16S rRNA + S-adenosyl-L-homocysteine + H(+). Its function is as follows. Specifically methylates the guanosine in position 1516 of 16S rRNA. The polypeptide is Ribosomal RNA small subunit methyltransferase J (Klebsiella pneumoniae (strain 342)).